The chain runs to 201 residues: Putative manganese efflux pump MntP (201 aa).

Transmembrane regions (helical) follow at residues 6-26 (CLAV…ATGI), 39-59 (LAFH…TLGL), 105-125 (LTLI…GLSL), 127-147 (VLGI…LLFT), and 169-189 (LAGG…HGVF).

Belongs to the MntP (TC 9.B.29) family.

The protein localises to the cell inner membrane. Functionally, probably functions as a manganese efflux pump. The sequence is that of Putative manganese efflux pump MntP from Nitratidesulfovibrio vulgaris (strain ATCC 29579 / DSM 644 / CCUG 34227 / NCIMB 8303 / VKM B-1760 / Hildenborough) (Desulfovibrio vulgaris).